The sequence spans 227 residues: Cytochrome c oxidase subunit 2 (227 aa).

Residues 1-14 (MAYPLQLGLQDASS) are Mitochondrial intermembrane-facing. A helical transmembrane segment spans residues 15–45 (PIMEELMNFHDHTLMIVFLISSLVLYLISLM). At 46–59 (LTTKLIHTSTMDAQ) the chain is on the mitochondrial matrix side. The helical transmembrane segment at 60–87 (EVETVWTILPAIILILIALPSLRILYMM) threads the bilayer. The Mitochondrial intermembrane segment spans residues 88–227 (DEINNPVLTV…LFENWSLSLT (140 aa)). Positions 161, 196, 198, 200, 204, and 207 each coordinate Cu cation. Residue glutamate 198 participates in Mg(2+) binding.

This sequence belongs to the cytochrome c oxidase subunit 2 family. In terms of assembly, component of the cytochrome c oxidase (complex IV, CIV), a multisubunit enzyme composed of 14 subunits. The complex is composed of a catalytic core of 3 subunits MT-CO1, MT-CO2 and MT-CO3, encoded in the mitochondrial DNA, and 11 supernumerary subunits COX4I, COX5A, COX5B, COX6A, COX6B, COX6C, COX7A, COX7B, COX7C, COX8 and NDUFA4, which are encoded in the nuclear genome. The complex exists as a monomer or a dimer and forms supercomplexes (SCs) in the inner mitochondrial membrane with NADH-ubiquinone oxidoreductase (complex I, CI) and ubiquinol-cytochrome c oxidoreductase (cytochrome b-c1 complex, complex III, CIII), resulting in different assemblies (supercomplex SCI(1)III(2)IV(1) and megacomplex MCI(2)III(2)IV(2)). Found in a complex with TMEM177, COA6, COX18, COX20, SCO1 and SCO2. Interacts with TMEM177 in a COX20-dependent manner. Interacts with COX20. Interacts with COX16. Requires Cu cation as cofactor.

The protein resides in the mitochondrion inner membrane. The catalysed reaction is 4 Fe(II)-[cytochrome c] + O2 + 8 H(+)(in) = 4 Fe(III)-[cytochrome c] + 2 H2O + 4 H(+)(out). Component of the cytochrome c oxidase, the last enzyme in the mitochondrial electron transport chain which drives oxidative phosphorylation. The respiratory chain contains 3 multisubunit complexes succinate dehydrogenase (complex II, CII), ubiquinol-cytochrome c oxidoreductase (cytochrome b-c1 complex, complex III, CIII) and cytochrome c oxidase (complex IV, CIV), that cooperate to transfer electrons derived from NADH and succinate to molecular oxygen, creating an electrochemical gradient over the inner membrane that drives transmembrane transport and the ATP synthase. Cytochrome c oxidase is the component of the respiratory chain that catalyzes the reduction of oxygen to water. Electrons originating from reduced cytochrome c in the intermembrane space (IMS) are transferred via the dinuclear copper A center (CU(A)) of subunit 2 and heme A of subunit 1 to the active site in subunit 1, a binuclear center (BNC) formed by heme A3 and copper B (CU(B)). The BNC reduces molecular oxygen to 2 water molecules using 4 electrons from cytochrome c in the IMS and 4 protons from the mitochondrial matrix. The polypeptide is Cytochrome c oxidase subunit 2 (MT-CO2) (Taterillus emini (Emin's gerbil)).